The following is a 117-amino-acid chain: Large ribosomal subunit protein uL18 (117 aa).

This sequence belongs to the universal ribosomal protein uL18 family. Part of the 50S ribosomal subunit; part of the 5S rRNA/L5/L18/L25 subcomplex. Contacts the 5S and 23S rRNAs.

In terms of biological role, this is one of the proteins that bind and probably mediate the attachment of the 5S RNA into the large ribosomal subunit, where it forms part of the central protuberance. The chain is Large ribosomal subunit protein uL18 from Onion yellows phytoplasma (strain OY-M).